The sequence spans 140 residues: 3-hydroxyacyl-[acyl-carrier-protein] dehydratase FabZ (140 aa).

Residue histidine 47 is part of the active site.

Belongs to the thioester dehydratase family. FabZ subfamily.

It localises to the cytoplasm. The enzyme catalyses a (3R)-hydroxyacyl-[ACP] = a (2E)-enoyl-[ACP] + H2O. Involved in unsaturated fatty acids biosynthesis. Catalyzes the dehydration of short chain beta-hydroxyacyl-ACPs and long chain saturated and unsaturated beta-hydroxyacyl-ACPs. The chain is 3-hydroxyacyl-[acyl-carrier-protein] dehydratase FabZ from Streptococcus pneumoniae serotype 2 (strain D39 / NCTC 7466).